A 409-amino-acid chain; its full sequence is Spermatogenesis-associated protein 2-like protein (409 aa).

Disordered regions lie at residues 233 to 257 (EDEG…TSEL), 270 to 299 (LWGA…PQPE), and 313 to 337 (RPGD…IPEP).

This sequence belongs to the SPATA2 family.

This is Spermatogenesis-associated protein 2-like protein (SPATA2L) from Bos taurus (Bovine).